A 167-amino-acid polypeptide reads, in one-letter code: MVNNRVTESTTTAVSSNGGPPKACAGCGGKIADRFLLYSMERYWHTRCLKCSCCQAQLGEIGTSCYTKSGMILCRNDYIRLFGSSGACSACGQSIPASEMVMRAQGSVYHLKCFTCATCRNRLVPGDRFHYVNGAIFCEHDRPTGLLSGHLNPLQSNPPMLPDQKVC.

Residues 1-17 (MVNNRVTESTTTAVSSN) show a composition bias toward polar residues. Positions 1–20 (MVNNRVTESTTTAVSSNGGP) are disordered. LIM zinc-binding domains are found at residues 22 to 84 (KACA…LFGS) and 86 to 148 (GACS…GLLS).

In terms of biological role, acts as a positive cofactor of GATA transcription factors to establish the identity of the ventral mesoderm during gastrulation. Down-regulation in the dorsal mesoderm is necessary for the proper formation of this territory since, when present, lmo4 may bind ldb1 and restrict the availability of this cofactor for Spemman organizer transcription factors. At neurula stages, suppresses primary neuron differentiation and modulates gene expression at the Isthmic Organizer of the midbrain-hindbrain boundary. This Xenopus tropicalis (Western clawed frog) protein is LIM domain transcription factor LMO4.1 (lmo4.1).